Consider the following 455-residue polypeptide: Bifunctional protein GlmU (455 aa).

The segment at 1–227 (MGLSVIILAA…CEEVQGVNDR (227 aa)) is pyrophosphorylase. UDP-N-acetyl-alpha-D-glucosamine contacts are provided by residues 8-11 (LAAG), lysine 22, glutamine 73, 78-79 (GT), 100-102 (YGD), glycine 137, glutamate 152, asparagine 167, and asparagine 225. Aspartate 102 provides a ligand contact to Mg(2+). Asparagine 225 contacts Mg(2+). The segment at 228–248 (WELTKLERYYQRLMAKKLSLA) is linker. The segment at 249 to 455 (GVTIIDPERF…KGWHRPTKKE (207 aa)) is N-acetyltransferase. UDP-N-acetyl-alpha-D-glucosamine contacts are provided by arginine 332 and lysine 350. Histidine 362 (proton acceptor) is an active-site residue. The UDP-N-acetyl-alpha-D-glucosamine site is built by tyrosine 365 and asparagine 376. Acetyl-CoA is bound by residues alanine 379, 385-386 (NY), serine 404, alanine 422, and arginine 439.

This sequence in the N-terminal section; belongs to the N-acetylglucosamine-1-phosphate uridyltransferase family. The protein in the C-terminal section; belongs to the transferase hexapeptide repeat family. As to quaternary structure, homotrimer. It depends on Mg(2+) as a cofactor.

Its subcellular location is the cytoplasm. It carries out the reaction alpha-D-glucosamine 1-phosphate + acetyl-CoA = N-acetyl-alpha-D-glucosamine 1-phosphate + CoA + H(+). The enzyme catalyses N-acetyl-alpha-D-glucosamine 1-phosphate + UTP + H(+) = UDP-N-acetyl-alpha-D-glucosamine + diphosphate. It participates in nucleotide-sugar biosynthesis; UDP-N-acetyl-alpha-D-glucosamine biosynthesis; N-acetyl-alpha-D-glucosamine 1-phosphate from alpha-D-glucosamine 6-phosphate (route II): step 2/2. It functions in the pathway nucleotide-sugar biosynthesis; UDP-N-acetyl-alpha-D-glucosamine biosynthesis; UDP-N-acetyl-alpha-D-glucosamine from N-acetyl-alpha-D-glucosamine 1-phosphate: step 1/1. The protein operates within bacterial outer membrane biogenesis; LPS lipid A biosynthesis. Catalyzes the last two sequential reactions in the de novo biosynthetic pathway for UDP-N-acetylglucosamine (UDP-GlcNAc). The C-terminal domain catalyzes the transfer of acetyl group from acetyl coenzyme A to glucosamine-1-phosphate (GlcN-1-P) to produce N-acetylglucosamine-1-phosphate (GlcNAc-1-P), which is converted into UDP-GlcNAc by the transfer of uridine 5-monophosphate (from uridine 5-triphosphate), a reaction catalyzed by the N-terminal domain. The chain is Bifunctional protein GlmU from Coxiella burnetii (strain RSA 493 / Nine Mile phase I).